The sequence spans 282 residues: uncharacterized protein (282 aa).

In terms of domain architecture, HTH rpiR-type spans 4-80 (STLTSKLESL…VDYLSDEKQY (77 aa)). The segment at residues 40–59 (VAELAQAAGVSSASVIRFTR) is a DNA-binding region (H-T-H motif). The SIS domain occupies 125-265 (IAQKIVEAKR…FFKYLTLTNE (141 aa)).

This is an uncharacterized protein from Providencia stuartii.